Consider the following 193-residue polypeptide: Achaete-scute homolog 2 (193 aa).

2 disordered regions span residues 1-58 (MDSR…RNER) and 128-177 (PLPR…GALS). Residues 50–102 (AAVARRNERERNRVKLVNLGFQALRQHVPHGGASKKLSKVETLRSAVEYIRAL) form the bHLH domain. The segment covering 128 to 152 (PLPRAPSGTPATAASPSCASSSPGR) has biased composition (low complexity).

As to quaternary structure, efficient DNA binding requires dimerization with another basic helix-loop-helix (bHLH) protein. Forms heterodimers with bHLH transcription factor TCF3. May not heterodimerise with bHLH protein HAND1. As to expression, expressed in placenta.

Its subcellular location is the nucleus. Functionally, transcription factor. Binds to E-box motifs 5'-CANNTG-3' in the regulatory elements of target genes, probably as a heterodimer with another basic helix-loop-helix (bHLH) protein such as the transcription factor TCF3. May bind both open and closed chromatin, acting as a pioneer transcription factor to allow other factors to bind and activate lineage-specific genes. Required during post-implantation development for the generation of some differentiated trophoblast cell types. Transcriptional activity of ASCL2 may be antagonised in a subset of trophoblast cells by bHLH transcription factor HAND1, perhaps by competing for dimerization with other bHLH proteins. Involved in differentiation and function of follicular T-helper (Tfh) cells, thereby playing a role in germinal center responses; probably modulates expression of genes involved in Tfh cell function, such as BCL6. May also act as a suppressor of Th1-, Th2- and Th17-cell differentiation. Induces the formation of stem cells in intestinal crypts in vitro, synergistically activating transcription of target genes, such as SOX9, together with TCF4/beta-catenin. May form a bistable transcriptional switch, controlling expression of its own gene together with Wnt/R-spondin signaling, and thereby maintaining stem cell characteristics. Modulates expression of target genes, including perhaps down-regulating EGR1/Krox24 and chemokine CXCL10/Mob-1 and up-regulating CXCR4 and CDKN1C/p57kip2, in Schwann cells. May play a role in reducing proliferation of Schwann cells, perhaps acting via modulation of expression of CDKN1C. May be dispensable for blastocyst formation and later embryonic function. May be involved in the determination of neuronal precursors. This Bos taurus (Bovine) protein is Achaete-scute homolog 2 (ASCL2).